The chain runs to 388 residues: uncharacterized protein (388 aa).

Residues Cys-18, Cys-24, Cys-27, and Cys-99 each contribute to the [4Fe-4S] cluster site. S-adenosyl-L-methionine is bound by residues Gln-212, Glu-262, and Asn-313. Cys-343 functions as the Nucleophile in the catalytic mechanism.

The protein belongs to the class I-like SAM-binding methyltransferase superfamily. RNA M5U methyltransferase family.

This is an uncharacterized protein from Bdellovibrio bacteriovorus (strain ATCC 15356 / DSM 50701 / NCIMB 9529 / HD100).